Reading from the N-terminus, the 610-residue chain is MPNIEELKQRQEKIRNFSIIAHIDHGKSTLADRILEKTETVSSREMQAQLLDSMDLERERGITIKLNAIELNYKAKDGETYIFHLIDTPGHVDFTYEVSRSLAACEGAILVVDAAQGIEAQTLANVYLALDNDLEILPVINKIDLPAADPERVRTEIEDVIGLDASEAVLASAKAGIGIEEILEQIVEKVPAPQGDVEAPLQALIFDSVYDAYRGVILQVRVVNGMVKTGDKIQMMSNGKTFDVTEVGIFTPKAVGRDYLATGDVGYVAASIKTVADTRVGDTVTLADNPAAEPLHGYKQMNPMVFAGLYPIESNKYNDLREALEKLQLNDASLQFEPETSQALGFGFRCGFLGLLHMDVIQERLEREFNIDLIMTAPSVVYHVNTTDGEMLEVSNPSEFPDPTRIDAIEEPYVKAQIMVPQEYVGAVMELAQRKRGDFETMEYIDDNRVNVIYQIPLAEIVFDFFDKLKSSTRGYASFDYELSEYRRSQLVKMDILLNGDKVDALSFIVHREFAYERGKLIVDKLKKIIPRQQFEVPIQAAIGQKIVARTDIKALRKNVLAKCYGGDVSRKRKLLEKQKAGKKRMKAIGSVEVPQEAFLSVLSMDEDEK.

Positions 12 to 194 constitute a tr-type G domain; the sequence is EKIRNFSIIA…QIVEKVPAPQ (183 aa). GTP-binding positions include 24–29 and 141–144; these read DHGKST and NKID.

It belongs to the TRAFAC class translation factor GTPase superfamily. Classic translation factor GTPase family. LepA subfamily.

It is found in the cell membrane. It catalyses the reaction GTP + H2O = GDP + phosphate + H(+). Required for accurate and efficient protein synthesis under certain stress conditions. May act as a fidelity factor of the translation reaction, by catalyzing a one-codon backward translocation of tRNAs on improperly translocated ribosomes. Back-translocation proceeds from a post-translocation (POST) complex to a pre-translocation (PRE) complex, thus giving elongation factor G a second chance to translocate the tRNAs correctly. Binds to ribosomes in a GTP-dependent manner. This is Elongation factor 4 from Streptococcus thermophilus (strain CNRZ 1066).